The sequence spans 326 residues: Acetyl-coenzyme A carboxylase carboxyl transferase subunit beta (326 aa).

The CoA carboxyltransferase N-terminal domain maps to 25-308 (LWVKCPASGE…RRDDRSTLQL (284 aa)). Positions 298–326 (RRRDDRSTLQLTPPKTHAPKPPEPKVKPD) are disordered. Residues 317–326 (KPPEPKVKPD) show a composition bias toward basic and acidic residues.

Belongs to the AccD/PCCB family. Acetyl-CoA carboxylase is a heterohexamer composed of biotin carboxyl carrier protein (AccB), biotin carboxylase (AccC) and two subunits each of ACCase subunit alpha (AccA) and ACCase subunit beta (AccD).

Its subcellular location is the cytoplasm. It carries out the reaction N(6)-carboxybiotinyl-L-lysyl-[protein] + acetyl-CoA = N(6)-biotinyl-L-lysyl-[protein] + malonyl-CoA. It functions in the pathway lipid metabolism; malonyl-CoA biosynthesis; malonyl-CoA from acetyl-CoA: step 1/1. Functionally, component of the acetyl coenzyme A carboxylase (ACC) complex. Biotin carboxylase (BC) catalyzes the carboxylation of biotin on its carrier protein (BCCP) and then the CO(2) group is transferred by the transcarboxylase to acetyl-CoA to form malonyl-CoA. In Hyphomonas neptunium (strain ATCC 15444), this protein is Acetyl-coenzyme A carboxylase carboxyl transferase subunit beta.